Reading from the N-terminus, the 396-residue chain is Tryptophan synthase beta chain (396 aa).

Residue Lys-86 is modified to N6-(pyridoxal phosphate)lysine.

Belongs to the TrpB family. As to quaternary structure, tetramer of two alpha and two beta chains. Requires pyridoxal 5'-phosphate as cofactor.

The catalysed reaction is (1S,2R)-1-C-(indol-3-yl)glycerol 3-phosphate + L-serine = D-glyceraldehyde 3-phosphate + L-tryptophan + H2O. It participates in amino-acid biosynthesis; L-tryptophan biosynthesis; L-tryptophan from chorismate: step 5/5. The beta subunit is responsible for the synthesis of L-tryptophan from indole and L-serine. The sequence is that of Tryptophan synthase beta chain from Aliivibrio fischeri (strain ATCC 700601 / ES114) (Vibrio fischeri).